The chain runs to 701 residues: MTALNPVLFLLCGVSVSLSLKVVSKRGSVDGCTDWSVDYLKYRVLHGEPVRIKCALFYGYIRANYTQAQSIGLSLMWYRSSGLGHGDFEEPISFDGTRMSKEEDAIWFRPAELQDAGLYSCVLRNSTFCMKVSMTLLVADNDTAGCYNSKLRYTEKGELGKSKDISCPDIQDYVQPGEKPQITWYKECNVQQWRSSVLQTADLLAIQDVREDDIGNYTCELLFGGFLVRRTTYLSVTAPLTEEPPRILFPSENKLLAMDVQLGSMLNLTCRAFFGYSGDISPLVYWMKGEKFIEDMDQSRIRESEIKTVREHLGEQEVSITLTIDSLEEVDLGNYSCYAENGNGRRQANVQIGKRVELMYTVELAGGLGAILLLLALLLSVYKCYRIELLLCYRHHFGGEDTDGDNKEYDAYLSYSKVELDQWGQELQEEERFALEILPDVLEKHYGYKLFIPDRDLIPTSTYIEDVSRCVDMSKRLIIVLTPSYVLRRGWSIFELESRLRNSLVSGDIKVILIECADLRGVINYQEVEELKQSIKCLSVVHWNGPQSNKPGSRFWKQLRYTMPYRRPQQTITNHALDTSEPGPFADLQTVSAISMATATSAALAPAHPELRPSLRSSYRSHSLARQKHSHYRSYDYELPFTAGGTLPPQHTYCNLPLTLLNGQRPVNNKTLRQHSLDEHHGNNAMLPLLPRETSISSVIW.

The N-terminal stretch at Met-1–Ser-19 is a signal peptide. Topologically, residues Leu-20–Thr-361 are extracellular. In terms of domain architecture, Ig-like C2-type 1 spans Thr-33 to Ser-133. Cys-54 and Cys-121 form a disulfide bridge. Asn-64, Asn-125, Asn-141, Asn-216, Asn-267, and Asn-334 each carry an N-linked (GlcNAc...) asparagine glycan. 2 Ig-like C2-type domains span residues Cys-146–Ser-235 and Pro-245–Gly-353. Cys-167 and Cys-219 are disulfide-bonded. Cys-270 and Cys-337 are joined by a disulfide. The chain crosses the membrane as a helical span at residues Val-362 to Tyr-382. The Cytoplasmic portion of the chain corresponds to Lys-383–Trp-701. The 157-residue stretch at Lys-407–Met-563 folds into the TIR domain. The active site involves Glu-495. The required for synaptic vesicle accumulation during synaptogenesis stretch occupies residues Pro-568–Trp-701.

The protein belongs to the interleukin-1 receptor family.

It localises to the cell membrane. Its subcellular location is the cytoplasm. It catalyses the reaction NAD(+) + H2O = ADP-D-ribose + nicotinamide + H(+). Functionally, may regulate secretion and presynaptic differentiation through inhibition of the activity of N-type voltage-gated calcium channel. During presynaptic differentiation may regulate both synaptic vesicle accumulation in axon terminals and subsequent axon terminal remodeling. The sequence is that of Interleukin-1 receptor accessory protein-like 1-A (il1rapl1a) from Danio rerio (Zebrafish).